A 261-amino-acid polypeptide reads, in one-letter code: ATP synthase subunit a (261 aa).

The next 6 helical transmembrane spans lie at 45 to 65 (ITNV…ILVL), 107 to 127 (VMTL…PLSF), 133 to 153 (MAVT…LGFM), 162 to 182 (MFWV…IEVI), 209 to 229 (IAGF…VTAI), and 232 to 252 (LELL…CVYL).

It belongs to the ATPase A chain family. As to quaternary structure, F-type ATPases have 2 components, CF(1) - the catalytic core - and CF(0) - the membrane proton channel. CF(1) has five subunits: alpha(3), beta(3), gamma(1), delta(1), epsilon(1). CF(0) has four main subunits: a, b, b' and c.

The protein resides in the cell inner membrane. Functionally, key component of the proton channel; it plays a direct role in the translocation of protons across the membrane. This is ATP synthase subunit a from Cereibacter sphaeroides (strain ATCC 17029 / ATH 2.4.9) (Rhodobacter sphaeroides).